Reading from the N-terminus, the 95-residue chain is Ferredoxin-like protein FixX (95 aa).

The protein belongs to the bacterial-type ferredoxin family. FixX subfamily.

Its function is as follows. Could be part of an electron transfer system required for anaerobic carnitine reduction. Could be a 3Fe-4S cluster-containing protein. The chain is Ferredoxin-like protein FixX (fixX) from Salmonella typhimurium (strain LT2 / SGSC1412 / ATCC 700720).